The following is a 320-amino-acid chain: Olfactory receptor 2C3 (320 aa).

At 1 to 26 the chain is on the extracellular side; sequence MMEIANVSSPEVFVLLGFSTRPSLET. N-linked (GlcNAc...) asparagine glycosylation is present at Asn-6. The helical transmembrane segment at 27-50 threads the bilayer; that stretch reads VLFIVVLSFYMVSILGNGIIILVS. At 51–58 the chain is on the cytoplasmic side; it reads HTDVHLHT. The chain crosses the membrane as a helical span at residues 59–80; that stretch reads PMYFFLANLPFLDMSFTTSIVP. Residues 81 to 101 lie on the Extracellular side of the membrane; that stretch reads QLLANLWGPQKTISYGGCVVQ. Cys-98 and Cys-190 are joined by a disulfide. A helical transmembrane segment spans residues 102-121; sequence FYISHWLGATECVLLATMSY. Residues 122 to 140 are Cytoplasmic-facing; sequence DRYAAICRPLHYTVIMHPQ. The helical transmembrane segment at 141 to 159 threads the bilayer; that stretch reads LCLGLALASWLGGLTTSMV. Topologically, residues 160 to 196 are extracellular; it reads GSTLTMLLPLCGNNCIDHFFCEMPLIMQLACVDTSLN. The chain crosses the membrane as a helical span at residues 197–220; sequence EMEMYLASFVFVVLPLGLILVSYG. Residues 221–237 are Cytoplasmic-facing; the sequence is HIARAVLKIRSAEGRRK. A helical transmembrane segment spans residues 238–260; sequence AFNTCSSHVAVVSLFYGSIIFMY. The Extracellular segment spans residues 261–273; that stretch reads LQPAKSTSHEQGK. A helical transmembrane segment spans residues 274-293; it reads FIALFYTVVTPALNPLIYTL. At 294-320 the chain is on the cytoplasmic side; that stretch reads RNTEVKSALRHMVLENCCGSAGKLAQI.

It belongs to the G-protein coupled receptor 1 family.

The protein localises to the cell membrane. Its function is as follows. Odorant receptor. This is Olfactory receptor 2C3 (OR2C3) from Homo sapiens (Human).